Reading from the N-terminus, the 122-residue chain is Large ribosomal subunit protein uL14 (122 aa).

The protein belongs to the universal ribosomal protein uL14 family. As to quaternary structure, part of the 50S ribosomal subunit. Forms a cluster with proteins L3 and L19. In the 70S ribosome, L14 and L19 interact and together make contacts with the 16S rRNA in bridges B5 and B8.

In terms of biological role, binds to 23S rRNA. Forms part of two intersubunit bridges in the 70S ribosome. This is Large ribosomal subunit protein uL14 from Pseudoalteromonas translucida (strain TAC 125).